The sequence spans 58 residues: UPF0339 protein MA_3316 (58 aa).

The protein belongs to the UPF0339 family.

This is UPF0339 protein MA_3316 from Methanosarcina acetivorans (strain ATCC 35395 / DSM 2834 / JCM 12185 / C2A).